The primary structure comprises 242 residues: Large ribosomal subunit protein uL1 (242 aa).

The protein belongs to the universal ribosomal protein uL1 family. As to quaternary structure, part of the 50S ribosomal subunit.

Functionally, binds directly to 23S rRNA. The L1 stalk is quite mobile in the ribosome, and is involved in E site tRNA release. Protein L1 is also a translational repressor protein, it controls the translation of the L11 operon by binding to its mRNA. The sequence is that of Large ribosomal subunit protein uL1 from Sulfurihydrogenibium sp. (strain YO3AOP1).